The sequence spans 320 residues: MKRIGILTSGGDAPGMNAAIRAVVRKSIFDGIEVYGINYGFAGLVAGDIRRLDVADVGDKIQRGGTFLYSARYPEFATEEGQLKGIEQLKKFGIEGLVVIGGDGSYHGAMALTKRGFPAVGIPGTIDNDIPGTDFTIGFDTAINTVLESIDRIRDTATSHVRTFVIEVMGRNAGDIALWSGVAGGADEIIIPEHDFDMKNVAKRIQEGRDRGKKHCLIILAEGVMGGNEFADKLSEYGDFHTRVSILGHVVRGGSPSARDRVLASKFGSYAVELLKEGKGGLCIGMLDNQVVAADIIDTLENNKHKPDLSLYELNHEISF.

Glycine 11 contacts ATP. 21–25 (RAVVR) contributes to the ADP binding site. Residues 72–73 (RY) and 102–105 (GDGS) each bind ATP. Aspartate 103 lines the Mg(2+) pocket. Substrate is bound at residue 125-127 (TID). The active-site Proton acceptor is aspartate 127. Arginine 154 provides a ligand contact to ADP. Substrate-binding positions include arginine 162 and 169-171 (MGR). ADP is bound by residues 185-187 (GAD), arginine 211, and 213-215 (KKH). Residues glutamate 222, arginine 243, and 249–252 (HVVR) contribute to the substrate site.

This sequence belongs to the phosphofructokinase type A (PFKA) family. ATP-dependent PFK group I subfamily. Prokaryotic clade 'B1' sub-subfamily. As to quaternary structure, homotetramer. Requires Mg(2+) as cofactor.

Its subcellular location is the cytoplasm. It catalyses the reaction beta-D-fructose 6-phosphate + ATP = beta-D-fructose 1,6-bisphosphate + ADP + H(+). It participates in carbohydrate degradation; glycolysis; D-glyceraldehyde 3-phosphate and glycerone phosphate from D-glucose: step 3/4. Allosterically activated by ADP and other diphosphonucleosides, and allosterically inhibited by phosphoenolpyruvate. Catalyzes the phosphorylation of D-fructose 6-phosphate to fructose 1,6-bisphosphate by ATP, the first committing step of glycolysis. The polypeptide is ATP-dependent 6-phosphofructokinase (Enterococcus faecalis (strain ATCC 700802 / V583)).